The sequence spans 403 residues: L-lactate oxidase (403 aa).

Residues 21 to 375 form the FMN hydroxy acid dehydrogenase domain; that stretch reads EGSVDFVNVF…KHFKLRHNPY (355 aa). Tyr47 contacts pyruvate. Residues 99-101, Ser128, and Gln150 contribute to the FMN site; that span reads PVA. A pyruvate-binding site is contributed by Tyr152. Thr178 provides a ligand contact to FMN. Positions 187 and 220 each coordinate pyruvate. Lys246 contributes to the FMN binding site. Positions 270 and 273 each coordinate pyruvate. His270 serves as the catalytic Proton acceptor. FMN-binding positions include 301–305 and Arg325; that span reads DSGVR.

It belongs to the FMN-dependent alpha-hydroxy acid dehydrogenase family. In terms of assembly, homotetramer. It depends on FMN as a cofactor.

The enzyme catalyses (S)-lactate + O2 = pyruvate + H2O2. Functionally, catalyzes the oxidation of (S)-lactate (L-lactate) to pyruvate, with a reduction of O2 to H2O2. Is likely involved in the L-lactate aerobic metabolism of S.iniae that enables the bacterium to utilize L-lactate as an energy source for growth under aerobic conditions in the absence (or at low concentrations) of glucose. In Streptococcus iniae (Streptococcus shiloi), this protein is L-lactate oxidase.